A 156-amino-acid chain; its full sequence is RNA pyrophosphohydrolase (156 aa).

The Nudix hydrolase domain maps to 6–148 (NYRPNVAAIV…KKNIYVKVIK (143 aa)). Positions 43–64 (GGIDKGESVKNALFRELKEEIG) match the Nudix box motif.

It belongs to the Nudix hydrolase family. RppH subfamily. It depends on a divalent metal cation as a cofactor.

Its function is as follows. Accelerates the degradation of transcripts by removing pyrophosphate from the 5'-end of triphosphorylated RNA, leading to a more labile monophosphorylated state that can stimulate subsequent ribonuclease cleavage. The protein is RNA pyrophosphohydrolase of Campylobacter jejuni subsp. jejuni serotype O:6 (strain 81116 / NCTC 11828).